Reading from the N-terminus, the 2279-residue chain is Zinc finger protein 318 (2279 aa).

2 stretches are compositionally biased toward low complexity: residues methionine 1 to serine 12 and serine 25 to serine 39. Disordered regions lie at residues methionine 1 to cysteine 140 and arginine 164 to aspartate 189. Residues methionine 1 to glutamine 1092 are interaction with AR. Serine 40 is modified (phosphoserine). Basic residues predominate over residues proline 53–arginine 67. Serine 79 and serine 81 each carry phosphoserine. The span at serine 110–serine 132 shows a compositional bias: basic and acidic residues. Phosphoserine is present on residues serine 136 and serine 173. Over residues asparagine 177 to aspartate 188 the composition is skewed to acidic residues. Residue tyrosine 205 is modified to Phosphotyrosine. Residues serine 207 and serine 214 each carry the phosphoserine modification. Disordered regions lie at residues threonine 279–glycine 346 and leucine 397–histidine 416. Residues leucine 311 to arginine 333 are compositionally biased toward basic and acidic residues. The stretch at phenylalanine 315–aspartate 343 forms a coiled coil. A phosphoserine mark is found at serine 464, serine 472, serine 501, and serine 527. Disordered regions lie at residues leucine 514–aspartate 533 and glycine 540–leucine 570. Glycyl lysine isopeptide (Lys-Gly) (interchain with G-Cter in SUMO2) cross-links involve residues lysine 547, lysine 553, lysine 566, and lysine 578. The segment covering phenylalanine 664–histidine 683 has biased composition (basic and acidic residues). The disordered stretch occupies residues phenylalanine 664–serine 709. The residue at position 842 (threonine 842) is a Phosphothreonine. A coiled-coil region spans residues glutamate 876 to leucine 980. Basic and acidic residues-rich tracts occupy residues glutamine 922–leucine 941 and glutamine 989–glutamate 1012. Disordered regions lie at residues glutamine 922–leucine 942 and glutamine 989–leucine 1051. Serine 1010 is modified (phosphoserine). A compositionally biased stretch (low complexity) spans lysine 1013–asparagine 1023. The segment covering lysine 1024–arginine 1034 has biased composition (basic and acidic residues). Phosphoserine is present on serine 1037. Matrin-type zinc fingers lie at residues alanine 1063–tyrosine 1097 and phenylalanine 1136–lysine 1166. Basic and acidic residues-rich tracts occupy residues arginine 1195–aspartate 1235, asparagine 1242–arginine 1251, glutamine 1258–serine 1267, lysine 1279–serine 1288, and serine 1296–lysine 1316. Residues arginine 1195–proline 1319 form a disordered region. 2 positions are modified to phosphoserine: serine 1243 and serine 1267. Serine 1420 bears the Phosphoserine mark. Disordered regions lie at residues alanine 1428 to alanine 1463, glycine 1577 to histidine 1628, serine 1702 to leucine 1735, and glutamate 1753 to isoleucine 1775. Residues isoleucine 1440 to alanine 1462 are compositionally biased toward pro residues. The segment covering serine 1602–serine 1623 has biased composition (low complexity). A compositionally biased stretch (basic and acidic residues) spans threonine 1708–leucine 1719. Serine 1713 is subject to Phosphoserine. Positions proline 1724–glutamine 1734 are enriched in pro residues. Positions glutamate 1768 to isoleucine 1792 form a coiled coil. 10 positions are modified to phosphoserine: serine 1856, serine 1896, serine 1971, serine 2030, serine 2035, serine 2091, serine 2101, serine 2189, serine 2192, and serine 2243. The tract at residues aspartate 2252–asparagine 2279 is disordered.

Homodimer. Heterodimer of isoform 1 and isoform 2. Isoform 1 and isoform 2 interact with AR. In terms of tissue distribution, expressed in endocrine tissue.

It localises to the nucleus. Functionally, acts as a transcriptional corepressor for AR-mediated transactivation function. May act as a transcriptional regulator during spermatogenesis and, in particular, during meiotic division. In terms of biological role, acts as a transcriptional coactivator for AR-mediated transactivation function. May act as a transcriptional regulator during spermatogenesis and, in particular, during meiotic division. This Homo sapiens (Human) protein is Zinc finger protein 318 (ZNF318).